The primary structure comprises 429 residues: Enolase (429 aa).

Glutamine 163 serves as a coordination point for (2R)-2-phosphoglycerate. The Proton donor role is filled by glutamate 205. Aspartate 242, glutamate 287, and aspartate 314 together coordinate Mg(2+). (2R)-2-phosphoglycerate-binding residues include lysine 339, arginine 368, serine 369, and lysine 390. Lysine 339 acts as the Proton acceptor in catalysis.

Belongs to the enolase family. Homooctamer. Mg(2+) serves as cofactor.

The protein localises to the cytoplasm. Its subcellular location is the secreted. The protein resides in the cell surface. It carries out the reaction (2R)-2-phosphoglycerate = phosphoenolpyruvate + H2O. It participates in carbohydrate degradation; glycolysis; pyruvate from D-glyceraldehyde 3-phosphate: step 4/5. Its function is as follows. Catalyzes the reversible conversion of 2-phosphoglycerate (2-PG) into phosphoenolpyruvate (PEP). It is essential for the degradation of carbohydrates via glycolysis. The protein is Enolase of Zymomonas mobilis subsp. mobilis (strain ATCC 31821 / ZM4 / CP4).